A 382-amino-acid polypeptide reads, in one-letter code: Dual-specificity RNA methyltransferase RlmN (382 aa).

E94 functions as the Proton acceptor in the catalytic mechanism. The Radical SAM core domain maps to 100–336; that stretch reads EANRGTLCVS…NTITRKTRGD (237 aa). A disulfide bridge connects residues C107 and C342. The [4Fe-4S] cluster site is built by C114, C118, and C121. S-adenosyl-L-methionine-binding positions include 168-169, S200, 222-224, and N299; these read GE and SLH. The active-site S-methylcysteine intermediate is the C342.

The protein belongs to the radical SAM superfamily. RlmN family. Requires [4Fe-4S] cluster as cofactor.

It localises to the cytoplasm. The enzyme catalyses adenosine(2503) in 23S rRNA + 2 reduced [2Fe-2S]-[ferredoxin] + 2 S-adenosyl-L-methionine = 2-methyladenosine(2503) in 23S rRNA + 5'-deoxyadenosine + L-methionine + 2 oxidized [2Fe-2S]-[ferredoxin] + S-adenosyl-L-homocysteine. It catalyses the reaction adenosine(37) in tRNA + 2 reduced [2Fe-2S]-[ferredoxin] + 2 S-adenosyl-L-methionine = 2-methyladenosine(37) in tRNA + 5'-deoxyadenosine + L-methionine + 2 oxidized [2Fe-2S]-[ferredoxin] + S-adenosyl-L-homocysteine. In terms of biological role, specifically methylates position 2 of adenine 2503 in 23S rRNA and position 2 of adenine 37 in tRNAs. m2A2503 modification seems to play a crucial role in the proofreading step occurring at the peptidyl transferase center and thus would serve to optimize ribosomal fidelity. This is Dual-specificity RNA methyltransferase RlmN from Legionella pneumophila subsp. pneumophila (strain Philadelphia 1 / ATCC 33152 / DSM 7513).